Reading from the N-terminus, the 271-residue chain is Aquaporin-1 (271 aa).

The Cytoplasmic portion of the chain corresponds to 1–11 (MASEFKKKLFW). A helical transmembrane segment spans residues 12 to 29 (RAVVAEFLAMILFIFISI). Over 30–48 (GSALGFHYPIKSNQTTGAV) the chain is Extracellular. Residue Asn42 is glycosylated (N-linked (GlcNAc...) asparagine). Residues 49 to 67 (QDNVKVSLAFGLSIATLAQ) traverse the membrane as a helical segment. Residues 68–70 (SVG) lie on the Cytoplasmic side of the membrane. Residues 71–84 (HISGAHLNPAVTLG) lie within the membrane without spanning it. Residues 78-80 (NPA) carry the NPA 1 motif. At 85-92 (LLLSCQIS) the chain is on the cytoplasmic side. Residues 93 to 111 (VLRAIMYIIAQCVGAIVAT) traverse the membrane as a helical segment. Residues 112–135 (AILSGITSSLPDNSLGLNALAPGV) are Extracellular-facing. Residues 136–155 (NSGQGLGIEIIGTLQLVLCV) form a helical membrane-spanning segment. The Cytoplasmic portion of the chain corresponds to 156–165 (LATTDRRRRD). A helical transmembrane segment spans residues 166–183 (LGGSGPLAIGFSVALGHL). At 184–188 (LAIDY) the chain is on the extracellular side. An intramembrane segment occupies 189–201 (TGCGINPARSFGS). The NPA 2 motif lies at 194–196 (NPA). The Extracellular segment spans residues 202–208 (SVITHNF). Residues 209–226 (QDHWIFWVGPFIGAALAV) form a helical membrane-spanning segment. Residues 227 to 271 (LIYDFILAPRSSDLTDRVKVWTSGQVEEYDLDADDINSRVEMKPK) lie on the Cytoplasmic side of the membrane. Ser249 carries the phosphoserine modification. Tyr255 bears the Phosphotyrosine mark. Ser264 bears the Phosphoserine mark.

This sequence belongs to the MIP/aquaporin (TC 1.A.8) family. In terms of assembly, homotetramer; each monomer provides an independent water pore. Component of the ankyrin-1 complex in the erythrocyte, composed of ANK1, RHCE, RHAG, SLC4A1, EPB42, GYPA, GYPB and AQP1. Interacts with EPHB2; involved in endolymph production in the inner ear. Identified in a complex with STOM. Interacts (via the N-terminal) with ANK1 (via ANK 1-5 repeats). Interacts (via the C-terminal) with EPB42.

Its subcellular location is the cell membrane. It catalyses the reaction H2O(in) = H2O(out). It carries out the reaction nitric oxide(out) = nitric oxide(in). The enzyme catalyses CO2(out) = CO2(in). The catalysed reaction is glycerol(in) = glycerol(out). It catalyses the reaction H2O2(out) = H2O2(in). It carries out the reaction K(+)(in) = K(+)(out). The enzyme catalyses Na(+)(in) = Na(+)(out). Forms a water channel that facilitates the transport of water across cell membranes, playing a crucial role in water homeostasis in various tissues. Could also be permeable to small solutes including hydrogen peroxide, glycerol and gases such as amonnia (NH3), nitric oxide (NO) and carbon dioxide (CO2). Recruited to the ankyrin-1 complex, a multiprotein complex of the erythrocyte membrane, it could be part of a CO2 metabolon, linking facilitated diffusion of CO2 across the membrane, anion exchange of Cl(-)/HCO3(-) and interconversion of dissolved CO2 and carbonic acid in the cytosol. In vitro, it shows non-selective gated cation channel activity and may be permeable to cations like K(+) and Na(+) in vivo. In Bos taurus (Bovine), this protein is Aquaporin-1.